The primary structure comprises 326 residues: D-alanine--D-alanine ligase (326 aa).

One can recognise an ATP-grasp domain in the interval 114 to 313 (KRVWLQHGLR…YAELCVSIVS (200 aa)). 140-195 (PDRLGLPLILKPPHEGSTVGITKVAGYSDMKEGYAQAAKFDDEVLAEQFIAGRELT) lines the ATP pocket. Mg(2+) is bound by residues Asp267, Glu280, and Asn282.

This sequence belongs to the D-alanine--D-alanine ligase family. It depends on Mg(2+) as a cofactor. The cofactor is Mn(2+).

It localises to the cytoplasm. It catalyses the reaction 2 D-alanine + ATP = D-alanyl-D-alanine + ADP + phosphate + H(+). It functions in the pathway cell wall biogenesis; peptidoglycan biosynthesis. In terms of biological role, cell wall formation. In Bordetella petrii (strain ATCC BAA-461 / DSM 12804 / CCUG 43448), this protein is D-alanine--D-alanine ligase.